A 302-amino-acid chain; its full sequence is Acetaldehyde dehydrogenase 2 (302 aa).

The Acyl-thioester intermediate role is filled by Cys130. NAD(+) is bound by residues 161–169 and Asn272; that span reads SVGPGTRRN.

It belongs to the acetaldehyde dehydrogenase family.

It carries out the reaction acetaldehyde + NAD(+) + CoA = acetyl-CoA + NADH + H(+). The polypeptide is Acetaldehyde dehydrogenase 2 (Cupriavidus necator (strain ATCC 17699 / DSM 428 / KCTC 22496 / NCIMB 10442 / H16 / Stanier 337) (Ralstonia eutropha)).